A 503-amino-acid polypeptide reads, in one-letter code: D-xylose-proton symporter-like 2 (503 aa).

Residues 1 to 15 show a composition bias toward polar residues; the sequence is MALDPEQQQPISSVS. The tract at residues 1 to 32 is disordered; that stretch reads MALDPEQQQPISSVSREFGKSSGEISPEREPL. N-acetylalanine is present on A2. S26 bears the Phosphoserine mark. 12 helical membrane-spanning segments follow: residues 42 to 62, 99 to 119, 124 to 144, 146 to 166, 187 to 207, 213 to 233, 305 to 325, 346 to 366, 375 to 395, 400 to 420, 437 to 457, and 467 to 487; these read YSVVAAILPFLFPALGGLLYG, GSLYGALFGSIVAFTIADVIG, LILAALLYLVGALVTALAPTY, VLIIGRVIYGVSVGLAMHAAP, FFIVLGMVGGYGIGSLTVNVH, MYATSVPLAVIMGIGMWWLPA, ALIIGGGLVLFQQITGQPSVL, VSILLGLLKLIMTGVAVVVID, LGGVGGMVVSLFLLGSYYLFF, VVAVVALLLYVGCYQLSFGPI, GLSLAVLVNFGANALVTFAFS, and ILFCGFGVICVLSLVFIFFIV.

The protein belongs to the major facilitator superfamily. Sugar transporter (TC 2.A.1.1) family.

It is found in the membrane. This is D-xylose-proton symporter-like 2 from Arabidopsis thaliana (Mouse-ear cress).